A 186-amino-acid polypeptide reads, in one-letter code: MAMLLNQAQPPQTRDGGGTQGASLGPGVPVGQQQLGLQQQQQDFDPVQRYRMLIPQLKESLQNLMKIAAQNLAQNTNIDNGQKSADGPVQRFDKSLEEFYALCDQMELCLRLAYECLSQSYDSAKHSPTLVPTATKPDAVQTESLPYTQYLSMIKSQISCAKDIHNALLECSKKIMGKTPNTQGGL.

A compositionally biased stretch (polar residues) spans 1 to 12 (MAMLLNQAQPPQ). The disordered stretch occupies residues 1–41 (MAMLLNQAQPPQTRDGGGTQGASLGPGVPVGQQQLGLQQQQ). The span at 25–41 (GPGVPVGQQQLGLQQQQ) shows a compositional bias: low complexity.

It belongs to the Mediator complex subunit 29 family. In terms of assembly, component of the Mediator complex.

The protein localises to the nucleus. In terms of biological role, component of the Mediator complex, a coactivator involved in the regulated transcription of nearly all RNA polymerase II-dependent genes. Mediator functions as a bridge to convey information from gene-specific regulatory proteins to the basal RNA polymerase II transcription machinery. Mediator is recruited to promoters by direct interactions with regulatory proteins and serves as a scaffold for the assembly of a functional preinitiation complex with RNA polymerase II and the general transcription factors. This chain is Mediator of RNA polymerase II transcription subunit 29 (med29), found in Xenopus laevis (African clawed frog).